We begin with the raw amino-acid sequence, 147 residues long: MVKWSKTELTIINDIFSHLDYDDIGPKALSRCLIVYPWTQRHFSGFGNLYNAEAIIGNANVAAHGIKVLHGLDRGLKNMDNIVDAYAELSTLHSEKLHVDPDNFKLLSDCITIVLAAKLGKAFTAETQAAFQKFMAVVVSALGKQYH.

Positions K3–H147 constitute a Globin domain. Heme b contacts are provided by H64 and H93.

This sequence belongs to the globin family. Hb1 is a heterotetramer of two alpha chains and two beta-1 chains. Red blood cells.

Involved in oxygen transport from gills to the various peripheral tissues. The protein is Hemoglobin subunit beta-1 (hbb1) of Cygnodraco mawsoni (Antarctic dragonfish).